The primary structure comprises 138 residues: DASH complex subunit DAD2 (138 aa).

The span at 1–14 (MSGFSSRPLSTHLR) shows a compositional bias: polar residues. Disordered regions lie at residues 1–25 (MSGFSSRPLSTHLRQPSLAPPQGQS) and 116–138 (PTEHAPALQAHAEGATEEESGRG).

Belongs to the DASH complex DAD2 family. As to quaternary structure, component of the DASH complex consisting of ASK1, DAD1, DAD2, DAD3, DAD4, DAM1, DUO1, HSK3, SPC19 and SPC34, with a stoichiometry of one copy of each subunit per complex. Multiple DASH complexes oligomerize to form a ring that encircles spindle microtubules and organizes the rod-like NDC80 complexes of the outer kinetochore. DASH complex oligomerization strengthens microtubule attachments. On cytoplasmic microtubules, DASH complexes appear to form patches instead of rings.

It is found in the chromosome. The protein localises to the centromere. It localises to the kinetochore. The protein resides in the cytoplasm. Its subcellular location is the cytoskeleton. It is found in the spindle. The protein localises to the nucleus. In terms of biological role, component of the DASH complex that connects microtubules with kinetochores and couples microtubule depolymerisation to chromosome movement; it is involved in retrieving kinetochores to the spindle poles before their re-orientation on the spindle in early mitosis and allows microtubule depolymerization to pull chromosomes apart and resist detachment during anaphase. Kinetochores, consisting of a centromere-associated inner segment and a microtubule-contacting outer segment, play a crucial role in chromosome segregation by mediating the physical connection between centromeric DNA and microtubules. Kinetochores also serve as an input point for the spindle assembly checkpoint, which delays anaphase until all chromosomes have bioriented on the mitotic spindle. The polypeptide is DASH complex subunit DAD2 (Chaetomium thermophilum (strain DSM 1495 / CBS 144.50 / IMI 039719) (Thermochaetoides thermophila)).